We begin with the raw amino-acid sequence, 920 residues long: Protein O-mannosyl-transferase TMTC3 (920 aa).

The Cytoplasmic segment spans residues 1-14 (MLEGKMADINFKEV). The chain crosses the membrane as a helical span at residues 15 to 35 (TLIVSVVAACYWNSLFCGFVF). Topologically, residues 36–94 (DDVSAILDNKDLHPSTPLKTLFQNDFWGTPMSEERSHKSYRPLTVLTFRLNYLLSELKP) are extracellular. The chain crosses the membrane as a helical span at residues 95-115 (MSYHLLNTVFHAVVSVIFLKV). Topologically, residues 116-125 (CRLFLDKRSS) are cytoplasmic. The next 2 membrane-spanning stretches (helical) occupy residues 126-144 (MIAALLFAVHPIHTEAVTG) and 145-163 (VVGRAELLSSVFFLAAFLS). Residues 164-171 (YTKSKGPD) are Cytoplasmic-facing. A helical transmembrane segment spans residues 172 to 192 (NSIVWTPIVLTVFLVAVATLC). The Extracellular segment spans residues 193-198 (KEQGIT). Residues 199–219 (VVGICCVYEVFVAQGYTLPML) traverse the membrane as a helical segment. At 220 to 236 (CTVAGQFLRGKGSIPLS) the chain is on the cytoplasmic side. Residues 237 to 257 (MLQTLVKLIVLMLSTLLLVVV) traverse the membrane as a helical segment. Topologically, residues 258-325 (RVQVIQSQLP…LIESFLDVRN (68 aa)) are extracellular. A helical membrane pass occupies residues 326-346 (LATFAFFCFLGALGIFSLRYP). At 347 to 358 (GDSSKTVLMALC) the chain is on the cytoplasmic side. The helical transmembrane segment at 359 to 379 (LMALPFIPASNLFFPVGFVVA) threads the bilayer. Over 380-381 (ER) the chain is Extracellular. The helical transmembrane segment at 382 to 402 (VLYVPSMGFCILVAHGWQKIS) threads the bilayer. At 403 to 409 (NKSVLKK) the chain is on the cytoplasmic side. A helical transmembrane segment spans residues 410–428 (LSWVCLSMVILTHALKTLH). The Extracellular portion of the chain corresponds to 429 to 920 (RNWDWESEYT…EEIERILNGE (492 aa)). 9 TPR repeats span residues 451-484 (AKLWNNVGHALENEKNFEKALKYFLQATHVQPDD), 485-518 (IGAHMNVGRTYKNLNRSREAEASYMLAKSLMPQI), 534-567 (NVYINLANLIRANESRLEEADQLYRQAISMRPDF), 568-601 (KQAYISRGELLLKMNKPLKAKEAYLKALELDRNN), 602-635 (ADLWYNLAIVYIELKEPNEALKNFNRALELNPKH), 673-706 (ANGYFNLGMLAMDDKKDSEAESWMKKAIKLQPDF), 707-740 (RSALFNLALLYSQTAKELKALPILEELLKYYPDH), 742-775 (KGLILKGDILMNQKKDIPGAKKCFEKILEMDPSN), and 776-809 (VQGKHNLCVVYFEEKELLKAERCLVETLALAPHE). N-linked (GlcNAc...) asparagine glycosylation occurs at asparagine 499. The residue at position 508 (tyrosine 508) is a Phosphotyrosine. A glycan (N-linked (GlcNAc...) asparagine) is linked at asparagine 546. The tract at residues 829–897 (VEQPLAPADK…APHKTTKDIK (69 aa)) is disordered. Residues 840–858 (PGTEEREEIPSEDVKEISS) show a composition bias toward basic and acidic residues. The span at 867-880 (KTNNNRNSKSNKQS) shows a compositional bias: low complexity. The span at 887-897 (DAPHKTTKDIK) shows a compositional bias: basic and acidic residues.

The protein belongs to the TMTC family.

It is found in the membrane. The protein resides in the endoplasmic reticulum. It carries out the reaction a di-trans,poly-cis-dolichyl beta-D-mannosyl phosphate + L-seryl-[protein] = 3-O-(alpha-D-mannosyl)-L-seryl-[protein] + a di-trans,poly-cis-dolichyl phosphate + H(+). It catalyses the reaction a di-trans,poly-cis-dolichyl beta-D-mannosyl phosphate + L-threonyl-[protein] = 3-O-(alpha-D-mannosyl)-L-threonyl-[protein] + a di-trans,poly-cis-dolichyl phosphate + H(+). The protein operates within protein modification; protein glycosylation. Transfers mannosyl residues to the hydroxyl group of serine or threonine residues. The 4 members of the TMTC family are O-mannosyl-transferases dedicated primarily to the cadherin superfamily, each member seems to have a distinct role in decorating the cadherin domains with O-linked mannose glycans at specific regions. Also acts as O-mannosyl-transferase on other proteins such as PDIA3. Involved in the positive regulation of proteasomal protein degradation in the endoplasmic reticulum (ER), and the control of ER stress response. The sequence is that of Protein O-mannosyl-transferase TMTC3 from Mus musculus (Mouse).